A 514-amino-acid polypeptide reads, in one-letter code: Peptide chain release factor 3 (514 aa).

One can recognise a tr-type G domain in the interval Lys-8–His-268. Residues Ser-17–Thr-24, Asp-85–His-89, and Asn-139–Asp-142 each bind GTP.

The protein belongs to the TRAFAC class translation factor GTPase superfamily. Classic translation factor GTPase family. PrfC subfamily.

The protein localises to the cytoplasm. Increases the formation of ribosomal termination complexes and stimulates activities of RF-1 and RF-2. It binds guanine nucleotides and has strong preference for UGA stop codons. It may interact directly with the ribosome. The stimulation of RF-1 and RF-2 is significantly reduced by GTP and GDP, but not by GMP. This chain is Peptide chain release factor 3, found in Streptococcus pyogenes serotype M28 (strain MGAS6180).